The chain runs to 367 residues: Leucine carboxyl methyltransferase 1 (367 aa).

Residues arginine 84, glycine 109, aspartate 132, 187 to 188 (DL), and glutamate 212 contribute to the S-adenosyl-L-methionine site.

The protein belongs to the methyltransferase superfamily. LCMT family.

The enzyme catalyses [phosphatase 2A protein]-C-terminal L-leucine + S-adenosyl-L-methionine = [phosphatase 2A protein]-C-terminal L-leucine methyl ester + S-adenosyl-L-homocysteine. In terms of biological role, methylates the carboxyl group of the C-terminal leucine residue of protein phosphatase 2A catalytic subunits to form alpha-leucine ester residues. The protein is Leucine carboxyl methyltransferase 1 (PPM1) of Candida albicans (strain SC5314 / ATCC MYA-2876) (Yeast).